The sequence spans 207 residues: MARSKSSNRWLEEHVNDPFVKQAQQDGYRSRASYKLLEINNKDRLIKPTDLVVDLGSAPGGWSQVAAKLVGHKGRVVASDILPMDPIAGVEFIQGDFTEQEVFDQIMAILDGARADVVISDMAPNISGVNAADQAASMYLVELALDMACQVLKPKGSFVAKVFHGEGYDEYVKTVRESFDKVVIRKPDSSRARSREVYLVAKGFRVA.

The S-adenosyl-L-methionine site is built by Gly60, Trp62, Asp80, Asp96, and Asp121. The active-site Proton acceptor is the Lys161.

This sequence belongs to the class I-like SAM-binding methyltransferase superfamily. RNA methyltransferase RlmE family.

It localises to the cytoplasm. It catalyses the reaction uridine(2552) in 23S rRNA + S-adenosyl-L-methionine = 2'-O-methyluridine(2552) in 23S rRNA + S-adenosyl-L-homocysteine + H(+). In terms of biological role, specifically methylates the uridine in position 2552 of 23S rRNA at the 2'-O position of the ribose in the fully assembled 50S ribosomal subunit. The protein is Ribosomal RNA large subunit methyltransferase E of Marinobacter nauticus (strain ATCC 700491 / DSM 11845 / VT8) (Marinobacter aquaeolei).